The sequence spans 548 residues: Spindle pole body-associated protein cut12 (548 aa).

The interval 122-325 (FKSPLLQSTP…GQQSKYKGKE (204 aa)) is interaction with plo1. Residues 123–182 (KSPLLQSTPKPNINNPDNENKSKHDEFDNRYNININESYKNETKSNQRLGEDVPSKKKYP) form a disordered region. The span at 126-139 (LLQSTPKPNINNPD) shows a compositional bias: polar residues. Composition is skewed to basic and acidic residues over residues 140 to 151 (NENKSKHDEFDN) and 161 to 182 (YKNETKSNQRLGEDVPSKKKYP). Positions 261-312 (KQKFSMLDSAHSDLELELTSIRERLESLILEKQEEINFWKQRCRALETEKIH) form a coiled coil. The segment covering 344-356 (PITTKVVSRPSQS) has biased composition (polar residues). 2 disordered regions span residues 344 to 369 (PITTKVVSRPSQSDVREPQEQVPSKN) and 510 to 548 (SRVDYDLKSPNQRTANAKKRLEERRRRRKLKLQELQLNS). A coiled-coil region spans residues 522–548 (RTANAKKRLEERRRRRKLKLQELQLNS).

In terms of assembly, self-associates. Interacts with plo1.

It is found in the cytoplasm. It localises to the cytoskeleton. The protein resides in the microtubule organizing center. The protein localises to the spindle pole body. Its function is as follows. Required for bipolar spindle formation. May act as a regulator of the p34cdc2/cyclin B kinase. Required for full activation of the plo1 kinase. However, in cut12.1 cells at restrictive temperature the H1 kinase does rise concomitant with entry into mitosis, indicating that cut12 is not required for activation of p34cdc2/cyclin B. The cut12.s11 allele may promote cdc2-independent phosphorylation of SPB proteins thereby overcoming the requirement for cdc25 in cell cycle progression. In Schizosaccharomyces pombe (strain 972 / ATCC 24843) (Fission yeast), this protein is Spindle pole body-associated protein cut12 (cut12).